Consider the following 466-residue polypeptide: 3-isopropylmalate dehydratase large subunit 1 (466 aa).

The [4Fe-4S] cluster site is built by Cys-347, Cys-407, and Cys-410.

This sequence belongs to the aconitase/IPM isomerase family. LeuC type 1 subfamily. As to quaternary structure, heterodimer of LeuC and LeuD. [4Fe-4S] cluster serves as cofactor.

It carries out the reaction (2R,3S)-3-isopropylmalate = (2S)-2-isopropylmalate. The protein operates within amino-acid biosynthesis; L-leucine biosynthesis; L-leucine from 3-methyl-2-oxobutanoate: step 2/4. Catalyzes the isomerization between 2-isopropylmalate and 3-isopropylmalate, via the formation of 2-isopropylmaleate. The protein is 3-isopropylmalate dehydratase large subunit 1 of Salmonella choleraesuis (strain SC-B67).